Here is a 264-residue protein sequence, read N- to C-terminus: 3-methyl-2-oxobutanoate hydroxymethyltransferase (264 aa).

2 residues coordinate Mg(2+): Asp45 and Asp84. Residues 45–46, Asp84, and Lys112 contribute to the 3-methyl-2-oxobutanoate site; that span reads DS. Glu114 is a Mg(2+) binding site. Glu181 (proton acceptor) is an active-site residue.

Belongs to the PanB family. As to quaternary structure, homodecamer; pentamer of dimers. It depends on Mg(2+) as a cofactor.

The protein localises to the cytoplasm. The catalysed reaction is 3-methyl-2-oxobutanoate + (6R)-5,10-methylene-5,6,7,8-tetrahydrofolate + H2O = 2-dehydropantoate + (6S)-5,6,7,8-tetrahydrofolate. The protein operates within cofactor biosynthesis; (R)-pantothenate biosynthesis; (R)-pantoate from 3-methyl-2-oxobutanoate: step 1/2. Functionally, catalyzes the reversible reaction in which hydroxymethyl group from 5,10-methylenetetrahydrofolate is transferred onto alpha-ketoisovalerate to form ketopantoate. The chain is 3-methyl-2-oxobutanoate hydroxymethyltransferase from Erwinia tasmaniensis (strain DSM 17950 / CFBP 7177 / CIP 109463 / NCPPB 4357 / Et1/99).